Reading from the N-terminus, the 559-residue chain is Probable D-2-hydroxyglutarate dehydrogenase, mitochondrial (559 aa).

Residues 1–80 constitute a mitochondrion transit peptide; sequence MARRAAAGLL…MNFEVQKRSF (80 aa). The region spanning 131–310 is the FAD-binding PCMH-type domain; that stretch reads YKGSSQLLLL…TKIAILTPAK (180 aa).

It belongs to the FAD-binding oxidoreductase/transferase type 4 family. Homodimer. It depends on FAD as a cofactor.

It localises to the mitochondrion. The catalysed reaction is (R)-2-hydroxyglutarate + A = 2-oxoglutarate + AH2. Functionally, catalyzes the oxidation of D-2-hydroxyglutarate to alpha-ketoglutarate. The chain is Probable D-2-hydroxyglutarate dehydrogenase, mitochondrial (D2HGDH) from Oryza sativa subsp. indica (Rice).